The sequence spans 96 residues: MAKYEILYIIRPNIEEEAKNALVARFDSILTDNGATIVESKDWEKRRLAYEINDFREGLYHIVNLEATDAVALNEFDRLSKINGDILRHMIVKLDA.

The protein belongs to the bacterial ribosomal protein bS6 family.

Functionally, binds together with bS18 to 16S ribosomal RNA. The polypeptide is Small ribosomal subunit protein bS6 (Streptococcus equi subsp. equi (strain 4047)).